Here is a 229-residue protein sequence, read N- to C-terminus: Adenylate kinase 1 (229 aa).

An ATP-binding site is contributed by 42–47 (GCGKGT). Position 62 is a phosphoserine (S62). AMP contacts are provided by residues S63, R68, 118–121 (GYPR), and Q125. R156 contributes to the ATP binding site. Residues R164 and R175 each contribute to the AMP site.

It belongs to the adenylate kinase family. AK1 subfamily. In terms of tissue distribution, high expression levels in the thorax, suggesting a possible function in the gastrointestinal or reproductive systems.

It localises to the cytoplasm. It catalyses the reaction AMP + ATP = 2 ADP. Its function is as follows. Catalyzes the reversible transfer of the terminal phosphate group between ATP and AMP. Plays an important role in cellular energy homeostasis and in adenine nucleotide metabolism. This chain is Adenylate kinase 1, found in Drosophila melanogaster (Fruit fly).